Consider the following 992-residue polypeptide: Disks large-associated protein 4 (992 aa).

Residues 1–20 show a composition bias toward basic and acidic residues; sequence MKGLGDSRPRHLSDSLDPPH. 2 disordered regions span residues 1 to 31 and 157 to 225; these read MKGL…DRNP and MEGT…PASG. Gly residues predominate over residues 162–171; sequence GKVGGNGSKK. Residues 172-194 show a composition bias toward basic and acidic residues; that stretch reads GGLEDGKGRRAKSKERAKAGEPK. Over residues 199-208 the composition is skewed to polar residues; it reads SNISGWWSSD. Ser-206 and Ser-207 each carry phosphoserine. Arg-290 is subject to Omega-N-methylarginine. The tract at residues 342 to 396 is disordered; the sequence is TTLLSPRDMDSTAEGPIPCRRMRSGSYIKAMGDEDSDESGGGSPKPSPKTAARRQ. Phosphoserine is present on residues Ser-377, Ser-380, Ser-384, Ser-388, Ser-405, Ser-415, and Ser-421. Disordered regions lie at residues 527–751, 763–798, and 915–992; these read SVSL…GPRQ, SYGD…AQPG, and TPEK…QTRL. Residues 528–554 show a composition bias toward low complexity; it reads VSLQSLSPPPSTGSLSNSRTLPSSSCL. The span at 576 to 591 shows a compositional bias: polar residues; the sequence is VTVQSSTESAQDTYLD. Ser-580, Ser-581, Ser-609, Ser-611, Ser-665, and Ser-744 each carry phosphoserine. A compositionally biased stretch (low complexity) spans 600 to 620; that stretch reads TSQSGLSNSSDSLDSSTRPPS. At Thr-915 the chain carries Phosphothreonine. 2 stretches are compositionally biased toward basic and acidic residues: residues 915–925 and 940–958; these read TPEKRKEEKKP and VSRD…EARK. Positions 969–978 are enriched in polar residues; sequence VRQNSATESA. Phosphoserine is present on Ser-973.

Belongs to the SAPAP family. As to quaternary structure, interacts with DLG1 and DLG4/PSD-95.

It localises to the membrane. Functionally, may play a role in the molecular organization of synapses and neuronal cell signaling. Could be an adapter protein linking ion channel to the subsynaptic cytoskeleton. May induce enrichment of PSD-95/SAP90 at the plasma membrane. This is Disks large-associated protein 4 (Dlgap4) from Mus musculus (Mouse).